A 58-amino-acid chain; its full sequence is Preprotein translocase subunit SecG (58 aa).

Topologically, residues 1–33 are cytoplasmic; it reads MARRKKYEGLNPFVAAGLIKFSEEGEMERIKLS. A helical transmembrane segment spans residues 34 to 55; it reads PKAAIAVSAAIIAALIIINLLL. Topologically, residues 56–58 are extracellular; it reads PPL.

This sequence belongs to the SEC61-beta family. Component of the protein translocase complex. Heterotrimer consisting of alpha (SecY), beta (SecG) and gamma (SecE) subunits. Can form oligomers of the heterotrimer.

Its subcellular location is the cell membrane. In terms of biological role, involved in protein export. The function of the beta subunit is unknown, but it may be involved in stabilization of the trimeric complex. This is Preprotein translocase subunit SecG from Pyrobaculum arsenaticum (strain DSM 13514 / JCM 11321 / PZ6).